Here is a 159-residue protein sequence, read N- to C-terminus: Protein-export protein SecB (159 aa).

It belongs to the SecB family. Homotetramer, a dimer of dimers. One homotetramer interacts with 1 SecA dimer.

It is found in the cytoplasm. Its function is as follows. One of the proteins required for the normal export of preproteins out of the cell cytoplasm. It is a molecular chaperone that binds to a subset of precursor proteins, maintaining them in a translocation-competent state. It also specifically binds to its receptor SecA. The chain is Protein-export protein SecB from Burkholderia vietnamiensis (strain G4 / LMG 22486) (Burkholderia cepacia (strain R1808)).